Consider the following 259-residue polypeptide: Type III pantothenate kinase (259 aa).

An ATP-binding site is contributed by 6–13; that stretch reads DVGNTNIV. Substrate contacts are provided by residues Y100 and 107 to 110; that span reads GADR. The active-site Proton acceptor is the D109. Position 129 (D129) interacts with K(+). T132 is an ATP binding site. T184 serves as a coordination point for substrate.

Belongs to the type III pantothenate kinase family. Homodimer. NH4(+) is required as a cofactor. It depends on K(+) as a cofactor.

The protein resides in the cytoplasm. It catalyses the reaction (R)-pantothenate + ATP = (R)-4'-phosphopantothenate + ADP + H(+). The protein operates within cofactor biosynthesis; coenzyme A biosynthesis; CoA from (R)-pantothenate: step 1/5. Its function is as follows. Catalyzes the phosphorylation of pantothenate (Pan), the first step in CoA biosynthesis. In Clostridium perfringens (strain ATCC 13124 / DSM 756 / JCM 1290 / NCIMB 6125 / NCTC 8237 / Type A), this protein is Type III pantothenate kinase.